The following is a 289-amino-acid chain: G1/S-specific cyclin-D2 (289 aa).

Residues Val-26–Leu-151 enclose the Cyclin N-terminal domain. Residues Asp-264 to Leu-289 form a disordered region. Phosphoserine is present on Ser-271. Thr-280 is modified (phosphothreonine).

This sequence belongs to the cyclin family. Cyclin D subfamily. Interacts with either CDK4 or CDK6 protein kinase to form a serine/threonine kinase holoenzyme complex. The cyclin subunit imparts substrate specificity to the complex. Phosphorylation at Thr-280 by MAP kinases is required for ubiquitination and degradation by the DCX(AMBRA1) complex. In terms of processing, ubiquitinated by the DCX(AMBRA1) complex during the transition from G1 to S cell phase, leading to its degradation: ubiquitination is dependent on Thr-280 phosphorylation. The DCX(AMBRA1) complex represents the major regulator of CCND2 stability during the G1/S transition. Polyubiquitinated by the SCF(FBXL2) complex, leading to proteasomal degradation.

It localises to the nucleus. The protein resides in the cytoplasm. The protein localises to the nucleus membrane. Regulatory component of the cyclin D2-CDK4 (DC) complex that phosphorylates and inhibits members of the retinoblastoma (RB) protein family including RB1 and regulates the cell-cycle during G(1)/S transition. Phosphorylation of RB1 allows dissociation of the transcription factor E2F from the RB/E2F complex and the subsequent transcription of E2F target genes which are responsible for the progression through the G(1) phase. Hypophosphorylates RB1 in early G(1) phase. Cyclin D-CDK4 complexes are major integrators of various mitogenenic and antimitogenic signals. This chain is G1/S-specific cyclin-D2 (CCND2), found in Bos taurus (Bovine).